The primary structure comprises 344 residues: Zinc transporter 9 (344 aa).

Residues 1–21 (MASILISGAAGVSIPLVGTLL) form a helical membrane-spanning segment. Residues 22–30 (PLNGGLMRG) are Cytoplasmic-facing. Residues 31-51 (AKAFAAGVILATGFVHMLSGG) traverse the membrane as a helical segment. Residues 52–72 (SKALSDPCLPEFPWKMFPFPE) are Extracellular-facing. Residues 73–93 (FFAMVAALLTLLADFMITGYY) form a helical membrane-spanning segment. Over 94–188 (ERKQEKMMNQ…DVGLDSGVRH (95 aa)) the chain is Cytoplasmic. A helical membrane pass occupies residues 189 to 209 (VVVSQILEMGIVSHSIIIGIS). Residues 210–221 (LGVSHSPCTIRP) are Extracellular-facing. Residues 222–242 (LLLALSFHQFFEGFALGGCVA) traverse the membrane as a helical segment. At 243–251 (EARLTPRGS) the chain is on the cytoplasmic side. A helical transmembrane segment spans residues 252–272 (AMMAFFFAITTPIGVAVGTAI). The Extracellular portion of the chain corresponds to 273-291 (ASSYNSYSVAALVAEGVLD). A helical transmembrane segment spans residues 292–312 (SLSAGILVYMALVDLIAADFL). Topologically, residues 313-323 (SKKMSVDFRVQ) are cytoplasmic. The helical transmembrane segment at 324–344 (VVSYCFLFLGAGMMSALAIWA) threads the bilayer.

Belongs to the ZIP transporter (TC 2.A.5) family.

It is found in the cell membrane. Its function is as follows. Zinc transporter involved in zinc uptake in roots. Targeted by BZIP19 transcription factor in response to zinc-deficient conditions. This is Zinc transporter 9 (ZIP9) from Arabidopsis thaliana (Mouse-ear cress).